The sequence spans 471 residues: Glutamate--tRNA ligase 1 (471 aa).

The 'HIGH' region signature appears at 10 to 20; the sequence is PSPTGYLHIGG. Positions 99, 101, 126, and 128 each coordinate Zn(2+). Positions 238–242 match the 'KMSKS' region motif; it reads RLSKR. An ATP-binding site is contributed by lysine 241.

This sequence belongs to the class-I aminoacyl-tRNA synthetase family. Glutamate--tRNA ligase type 1 subfamily. In terms of assembly, monomer. Zn(2+) serves as cofactor.

It localises to the cytoplasm. It carries out the reaction tRNA(Glu) + L-glutamate + ATP = L-glutamyl-tRNA(Glu) + AMP + diphosphate. In terms of biological role, catalyzes the attachment of glutamate to tRNA(Glu) in a two-step reaction: glutamate is first activated by ATP to form Glu-AMP and then transferred to the acceptor end of tRNA(Glu). This Alkalilimnicola ehrlichii (strain ATCC BAA-1101 / DSM 17681 / MLHE-1) protein is Glutamate--tRNA ligase 1.